The sequence spans 485 residues: Protein LAZ1 (485 aa).

Topologically, residues 1–19 (MDILKSYHLLAAAYSAPAW) are cytoplasmic. A helical membrane pass occupies residues 20–40 (ASFMAGAFLVLTLSLSLFLVF). Topologically, residues 41 to 53 (DHLSTYKNPEEQK) are lumenal. Residues 54–74 (FLIGVILMVPCYSIESFASLV) form a helical membrane-spanning segment. At 75–167 (KPSISVDCGI…QVVKFGIVQY (93 aa)) the chain is on the cytoplasmic side. Residues 168 to 188 (MIIKSLTALTALILEAFGVYC) form a helical membrane-spanning segment. Topologically, residues 189 to 196 (EGEFKWGC) are lumenal. A helical transmembrane segment spans residues 197–217 (GYPYLAVVLNFSQSWALYCLV). Topologically, residues 218-241 (QFYGATKDELAHIQPLAKFLTFKS) are cytoplasmic. Residues 242–262 (IVFLTWWQGVAIALLSSLGLF) form a helical membrane-spanning segment. The Lumenal portion of the chain corresponds to 263-277 (KSSIAQSLQLKTSVQ). Residues 278 to 298 (DFIICIEMGIASVVHLYVFPA) traverse the membrane as a helical segment. The Cytoplasmic segment spans residues 299-485 (KPYGLMGDRF…VRGRRWITKD (187 aa)). Residues 384–415 (MEKSITKFNEKLHKISQNIKKHDKEKRRVKDD) are a coiled coil. Residues 400–485 (QNIKKHDKEK…VRGRRWITKD (86 aa)) form a disordered region. Residues 403–416 (KKHDKEKRRVKDDS) show a composition bias toward basic and acidic residues. Positions 455–469 (GYTSAESGGESSSDQ) are enriched in polar residues. The span at 476–485 (VRGRRWITKD) shows a compositional bias: basic and acidic residues.

The protein belongs to the TMEM184 family.

It localises to the endomembrane system. The protein resides in the cell membrane. Its subcellular location is the cytoplasm. The protein localises to the cytosol. Required for programmed cell death (PCD) associated with hypersensitive response (HR). Involved both in the induction of EDS1/PAD4 mediated HR and in accelerated cell death in the acd11 mutant. Not required for HR induction elicited through pathways exclusively dependent on CC-NB-LRR resistance proteins. This chain is Protein LAZ1, found in Arabidopsis thaliana (Mouse-ear cress).